We begin with the raw amino-acid sequence, 156 residues long: 6,7-dimethyl-8-ribityllumazine synthase (156 aa).

Residues F23, 57–59 (AFE), and 81–83 (AVI) each bind 5-amino-6-(D-ribitylamino)uracil. A (2S)-2-hydroxy-3-oxobutyl phosphate-binding site is contributed by 86-87 (AT). H89 (proton donor) is an active-site residue. Residue F114 participates in 5-amino-6-(D-ribitylamino)uracil binding. R128 provides a ligand contact to (2S)-2-hydroxy-3-oxobutyl phosphate.

This sequence belongs to the DMRL synthase family.

The enzyme catalyses (2S)-2-hydroxy-3-oxobutyl phosphate + 5-amino-6-(D-ribitylamino)uracil = 6,7-dimethyl-8-(1-D-ribityl)lumazine + phosphate + 2 H2O + H(+). Its pathway is cofactor biosynthesis; riboflavin biosynthesis; riboflavin from 2-hydroxy-3-oxobutyl phosphate and 5-amino-6-(D-ribitylamino)uracil: step 1/2. Catalyzes the formation of 6,7-dimethyl-8-ribityllumazine by condensation of 5-amino-6-(D-ribitylamino)uracil with 3,4-dihydroxy-2-butanone 4-phosphate. This is the penultimate step in the biosynthesis of riboflavin. This Campylobacter concisus (strain 13826) protein is 6,7-dimethyl-8-ribityllumazine synthase.